The primary structure comprises 670 residues: E3 ubiquitin-protein ligase MAG2 (670 aa).

Disordered stretches follow at residues Met1–Arg84 and Glu124–His145. Polar residues predominate over residues Asp20 to Asn39. The span at Ser51–Arg66 shows a compositional bias: basic and acidic residues. The RING-type zinc finger occupies Cys195 to Gly250. Residues Thr609 to Gly670 form a disordered region. A compositionally biased stretch (basic and acidic residues) spans Glu610 to Gln622. Low complexity predominate over residues Val637–Gly649.

Belongs to the RNF10 family.

The protein resides in the cytoplasm. The catalysed reaction is S-ubiquitinyl-[E2 ubiquitin-conjugating enzyme]-L-cysteine + [acceptor protein]-L-lysine = [E2 ubiquitin-conjugating enzyme]-L-cysteine + N(6)-ubiquitinyl-[acceptor protein]-L-lysine.. The protein operates within protein modification; protein ubiquitination. Its function is as follows. E3 ubiquitin-protein ligase involved in the degradation of non-functional 18S rRNAs in response to stalled ribosomes. Catalyzes monoubiquitination of RPS3/uS3 in response to stalled ribosomes, initiating a HEL2-dependent response that activates the degradation of non-functional 18S rRNAs. The chain is E3 ubiquitin-protein ligase MAG2 from Saccharomyces cerevisiae (strain ATCC 204508 / S288c) (Baker's yeast).